Consider the following 385-residue polypeptide: Homoserine O-succinyltransferase (385 aa).

In terms of domain architecture, AB hydrolase-1 spans 51–359; the sequence is NAILICHALS…EATEGHDAFL (309 aa). Serine 157 functions as the Nucleophile in the catalytic mechanism. Position 227 (arginine 227) interacts with substrate. Residues aspartate 322 and histidine 355 contribute to the active site. Aspartate 356 serves as a coordination point for substrate.

This sequence belongs to the AB hydrolase superfamily. MetX family. Homodimer.

The protein resides in the cytoplasm. It catalyses the reaction L-homoserine + succinyl-CoA = O-succinyl-L-homoserine + CoA. The protein operates within amino-acid biosynthesis; L-methionine biosynthesis via de novo pathway; O-succinyl-L-homoserine from L-homoserine: step 1/1. In terms of biological role, transfers a succinyl group from succinyl-CoA to L-homoserine, forming succinyl-L-homoserine. The sequence is that of Homoserine O-succinyltransferase from Marinomonas sp. (strain MWYL1).